The sequence spans 301 residues: MFALTFLGTSASVPSAERNHPALLVEAAGKRILIDCGEGTQRQLLRSGAGFRRLDRILLTHAHLDHVLGIPGLFSTLGLRQSSDVMTIHGGPGTLDIVIRMLAGLWGAGRAPIPVEFAALSEGQVIDAGGFTIDCFPVRHRDTDSFGFVFQSPARRHLLPDRLASLGVPDGPLRGELAQGRPVVIEDGRTIDPEDVLGPATGGRKLVVIGDTETTEGLSQYVADADMLVIEATFLDRDASIARDYGHLTAAEAAAFAAANNVGQLVLTHMSGRYEDEEILAEAARIFPNSRIAADFDHIVV.

7 residues coordinate Zn(2+): histidine 61, histidine 63, aspartate 65, histidine 66, histidine 140, aspartate 211, and histidine 269. The active-site Proton acceptor is aspartate 65.

Belongs to the RNase Z family. As to quaternary structure, homodimer. Zn(2+) is required as a cofactor.

The catalysed reaction is Endonucleolytic cleavage of RNA, removing extra 3' nucleotides from tRNA precursor, generating 3' termini of tRNAs. A 3'-hydroxy group is left at the tRNA terminus and a 5'-phosphoryl group is left at the trailer molecule.. Zinc phosphodiesterase, which displays some tRNA 3'-processing endonuclease activity. Probably involved in tRNA maturation, by removing a 3'-trailer from precursor tRNA. This chain is Ribonuclease Z, found in Bradyrhizobium diazoefficiens (strain JCM 10833 / BCRC 13528 / IAM 13628 / NBRC 14792 / USDA 110).